The chain runs to 195 residues: Imidazoleglycerol-phosphate dehydratase (195 aa).

It belongs to the imidazoleglycerol-phosphate dehydratase family.

The protein resides in the cytoplasm. The enzyme catalyses D-erythro-1-(imidazol-4-yl)glycerol 3-phosphate = 3-(imidazol-4-yl)-2-oxopropyl phosphate + H2O. It functions in the pathway amino-acid biosynthesis; L-histidine biosynthesis; L-histidine from 5-phospho-alpha-D-ribose 1-diphosphate: step 6/9. This is Imidazoleglycerol-phosphate dehydratase from Cupriavidus pinatubonensis (strain JMP 134 / LMG 1197) (Cupriavidus necator (strain JMP 134)).